Reading from the N-terminus, the 288-residue chain is Glycine--tRNA ligase alpha subunit (288 aa).

The protein belongs to the class-II aminoacyl-tRNA synthetase family. Tetramer of two alpha and two beta subunits.

It is found in the cytoplasm. The enzyme catalyses tRNA(Gly) + glycine + ATP = glycyl-tRNA(Gly) + AMP + diphosphate. The chain is Glycine--tRNA ligase alpha subunit from Rickettsia rickettsii (strain Iowa).